Here is a 396-residue protein sequence, read N- to C-terminus: Elongation factor Tu (396 aa).

Positions 11–205 (KPHVNIGTIG…VVDEYIPTPK (195 aa)) constitute a tr-type G domain. The tract at residues 20-27 (GHVDHGKT) is G1. 20–27 (GHVDHGKT) is a binding site for GTP. T27 serves as a coordination point for Mg(2+). The segment at 61–65 (GITIN) is G2. The segment at 82 to 85 (DAPG) is G3. GTP-binding positions include 82–86 (DAPGH) and 137–140 (NKTD). The tract at residues 137–140 (NKTD) is G4. Positions 175-177 (SAL) are G5.

It belongs to the TRAFAC class translation factor GTPase superfamily. Classic translation factor GTPase family. EF-Tu/EF-1A subfamily. As to quaternary structure, monomer.

It is found in the cytoplasm. The catalysed reaction is GTP + H2O = GDP + phosphate + H(+). Its function is as follows. GTP hydrolase that promotes the GTP-dependent binding of aminoacyl-tRNA to the A-site of ribosomes during protein biosynthesis. This is Elongation factor Tu from Limosilactobacillus fermentum (strain NBRC 3956 / LMG 18251) (Lactobacillus fermentum).